The chain runs to 130 residues: uncharacterized protein (130 aa).

This is an uncharacterized protein from Methanocaldococcus jannaschii (strain ATCC 43067 / DSM 2661 / JAL-1 / JCM 10045 / NBRC 100440) (Methanococcus jannaschii).